A 501-amino-acid chain; its full sequence is Fumarate reductase 2 (501 aa).

The N-terminal 32 residues, 1 to 32 (MIRSVRRVFIYVSIFVLIIVLKRTLSGTDQTS), are a transit peptide targeting the mitochondrion. Residue 37–51 (VVVIGSGLAGLTTSN) coordinates FAD. Catalysis depends on residues histidine 281 and arginine 304.

It belongs to the FAD-dependent oxidoreductase 2 family. FRD/SDH subfamily. FAD serves as cofactor.

It localises to the mitochondrion. It carries out the reaction succinate + NAD(+) = fumarate + NADH + H(+). Its function is as follows. Irreversibly catalyzes the reduction of fumarate to succinate. Together with the second isozyme of soluble fumarate reductase (FRD1), essential for anaerobic growth. Involved in maintaining redox balance during oxygen deficiency conditions. Reduction of fumarate is the main source of succinate during fermentation, and under anaerobic conditions, the formation of succinate is strictly required for the reoxidation of FADH(2). In Saccharomyces cerevisiae (strain ATCC 204508 / S288c) (Baker's yeast), this protein is Fumarate reductase 2 (OSM1).